Consider the following 386-residue polypeptide: 11-beta-hydroxysteroid dehydrogenase type 2 (386 aa).

82–111 serves as a coordination point for NAD(+); that stretch reads TRAVLITGCDTGFGKETAKKLDAMGFTVLA. Ser219 is a binding site for substrate. Residue Tyr232 is the Proton acceptor of the active site.

It belongs to the short-chain dehydrogenases/reductases (SDR) family. Interacts with ligand-free cytoplasmic NR3C2. As to expression, highly expressed in kidney. Also found in colon and small intestine. Not expressed in the adrenal gland. Expressed in uterus.

The protein localises to the microsome. It is found in the endoplasmic reticulum. The enzyme catalyses an 11beta-hydroxysteroid + NAD(+) = an 11-oxosteroid + NADH + H(+). The catalysed reaction is corticosterone + NAD(+) = 11-dehydrocorticosterone + NADH + H(+). It carries out the reaction 11beta,17beta-dihydroxyandrost-4-ene-3-one + NAD(+) = 17beta-hydroxyandrost-4-ene-3,11-dione + NADH + H(+). It catalyses the reaction 11beta-hydroxyandrost-4-ene-3,17-dione + NAD(+) = androst-4-ene-3,11,17-trione + NADH + H(+). It participates in steroid metabolism. Inhibited by glycyrrhetinic acid. Induced by progesterone, through the Ihh signaling pathway. Functionally, catalyzes the conversion of biologically active 11beta-hydroxyglucocorticoids (11beta-hydroxysteroid) such as corticosterone, to inactive 11-ketoglucocorticoids (11-oxosteroid) such as 11-dehydrocorticosterone, in the presence of NAD(+). Functions as a dehydrogenase (oxidase), thereby decreasing the concentration of active glucocorticoids, thus protecting the nonselective mineralocorticoid receptor from occupation by glucocorticoids. Plays an important role in maintaining glucocorticoids balance during preimplantation and protects the fetus from excessive maternal corticosterone exposure. Catalyzes the oxidation of 11beta-hydroxytestosterone (11beta,17beta-dihydroxyandrost-4-ene-3-one) to 11-ketotestosterone (17beta-hydroxyandrost-4-ene-3,11-dione), a major bioactive androgen. Catalyzes the conversion of 11beta-hydroxyandrostenedione (11beta-hydroxyandrost-4-ene-3,17-dione) to 11-ketoandrostenedione (androst-4-ene-3,11,17-trione), which can be further metabolized to 11-ketotestosterone. Converts 7-beta-25-dihydroxycholesterol to 7-oxo-25-hydroxycholesterol in vitro. 7-beta-25-dihydroxycholesterol (not 7-oxo-25-hydroxycholesterol) acts as a ligand for the G-protein-coupled receptor (GPCR) Epstein-Barr virus-induced gene 2 (EBI2) and may thereby regulate immune cell migration. The protein is 11-beta-hydroxysteroid dehydrogenase type 2 (Hsd11b2) of Mus musculus (Mouse).